We begin with the raw amino-acid sequence, 61 residues long: Metallothionein-1F (61 aa).

Position 1 is an N-acetylmethionine (M1). The segment at 1–29 (MDPNCSCPTGGSCTCAGSCTCKACRCTSC) is beta. Residues C5, C7, C13, C15, C19, C21, C24, C26, C29, C33, C34, C36, C37, C41, C44, C48, C50, and C57 each contribute to the a divalent metal cation site. The tract at residues 30-61 (KKSCCSCCPAGCAKCAQGCICKGASDKCSCCA) is alpha. A Phosphoserine modification is found at S58. Residues C59 and C60 each contribute to the a divalent metal cation site.

The protein belongs to the metallothionein superfamily. Type 1 family. Monomer.

Its function is as follows. Metallothioneins have a high content of cysteine residues that bind various heavy metals; these proteins are transcriptionally regulated by both heavy metals and glucocorticoids. In Sus scrofa (Pig), this protein is Metallothionein-1F (MT1F).